A 622-amino-acid chain; its full sequence is Probable ATP-dependent RNA helicase DDX41 (622 aa).

Over residues 1 to 15 (MEDSEPERKRARADE) the composition is skewed to basic and acidic residues. Disordered regions lie at residues 1–39 (MEDS…YVPL) and 51–84 (LQRR…PQSN). The residue at position 4 (Ser-4) is a Phosphoserine. Lys-9 is subject to N6-acetyllysine. Residue Lys-9 forms a Glycyl lysine isopeptide (Lys-Gly) (interchain with G-Cter in ubiquitin) linkage. Phosphoserine is present on residues Ser-21 and Ser-23. The span at 24 to 33 (EDEDEDDEDY) shows a compositional bias: acidic residues. Phosphotyrosine is present on Tyr-33. Residue Lys-115 forms a Glycyl lysine isopeptide (Lys-Gly) (interchain with G-Cter in ubiquitin) linkage. The Q motif motif lies at 181-209 (KSFKEMKFPAAILRGLKKKGILHPTPIQI). The region spanning 212–396 (IPTILSGRDM…KSALVKPVTI (185 aa)) is the Helicase ATP-binding domain. 225–232 (AFTGSGKT) serves as a coordination point for ATP. Positions 344-347 (DEAD) match the DEAD box motif. In terms of domain architecture, Helicase C-terminal spans 407–567 (DVIQEVEYVK…KVPPVLQVLH (161 aa)). Tyr-414 is modified (phosphotyrosine). Residues Lys-416 and Lys-442 each participate in a glycyl lysine isopeptide (Lys-Gly) (interchain with G-Cter in SUMO2) cross-link. Residues 580–597 (RGCAFCGGLGHRITDCPK) form a CCHC-type zinc finger.

Belongs to the DEAD box helicase family. DDX41 subfamily. In terms of assembly, identified in the spliceosome C complex. Interacts with ERCC6. Interacts with FAM50A. Interacts with STING1. Interacts with CGAS. Interacts with several spliceosomes components such as PRP19 or CDC5L. Acetylation at Lys-9 regulates the nuclear/cytoplasmic localization. In terms of processing, phosphorylated by BTK; phosphorylation induces binding to dsDNA and STING1. Post-translationally, 'Lys-48'-linked ubiquitinated and degraded by TRIM21 leading to negative regulation of the innate immune response to intracellular dsDNA.

The protein resides in the nucleus. The protein localises to the cytoplasm. The enzyme catalyses ATP + H2O = ADP + phosphate + H(+). In terms of biological role, multifunctional protein that participates in many aspects of cellular RNA metabolism. Plays pivotal roles in innate immune sensing and hematopoietic homeostasis. Recognizes foreign or self-nucleic acids generated during microbial infection, thereby initiating anti-pathogen responses. Mechanistically, phosphorylation by BTK allows binding to dsDNA leading to interaction with STING1. Modulates the homeostasis of dsDNA through its ATP-dependent DNA-unwinding activity and ATP-independent strand-annealing activity. In turn, induces STING1-mediated type I interferon and cytokine responses to DNA and DNA viruses. During murine leukemia virus infection, primarily senses the DNA/RNA hybrid generated at the first step of reverse transcription, while cGAS recognizes dsDNA generated at the next step and both are needed for the antiretroviral innate immune response. Selectively modulates the transcription of certain immunity-associated genes by regulating their alternative splicing. Binds to RNA (R)-loops, structures consisting of DNA/RNA hybrids and a displaced strand of DNA that occur during transcription, and prevents their accumulation, thereby maintaining genome stability. Also participates in pre-mRNA splicing, translational regulation and snoRNA processing, which is essential for ribosome biogenesis. The chain is Probable ATP-dependent RNA helicase DDX41 (Ddx41) from Mus musculus (Mouse).